A 336-amino-acid polypeptide reads, in one-letter code: Foldase protein PrsA (336 aa).

Residues 1–22 (MKSAKKLLSVLCLGIFILTFTA) form the signal peptide. Cysteine 23 carries N-palmitoyl cysteine lipidation. Cysteine 23 carries S-diacylglycerol cysteine lipidation. One can recognise a PpiC domain in the interval 194 to 286 (PNTMNVSHIL…WGYHIIKVNS (93 aa)).

It belongs to the PrsA family.

The protein resides in the cell membrane. The enzyme catalyses [protein]-peptidylproline (omega=180) = [protein]-peptidylproline (omega=0). In terms of biological role, plays a major role in protein secretion by helping the post-translocational extracellular folding of several secreted proteins. In Clostridium botulinum (strain ATCC 19397 / Type A), this protein is Foldase protein PrsA.